A 50-amino-acid chain; its full sequence is Sperm protamine P1 (50 aa).

The protein belongs to the protamine P1 family. Testis.

It is found in the nucleus. It localises to the chromosome. Its function is as follows. Protamines substitute for histones in the chromatin of sperm during the haploid phase of spermatogenesis. They compact sperm DNA into a highly condensed, stable and inactive complex. This is Sperm protamine P1 (PRM1) from Chilonatalus micropus (Cuban funnel-eared bat).